We begin with the raw amino-acid sequence, 224 residues long: tRNA (guanine-N(7)-)-methyltransferase (224 aa).

S-adenosyl-L-methionine is bound by residues E54, E79, and D129. Residue D129 is part of the active site. Positions 133 and 165 each coordinate substrate.

It belongs to the class I-like SAM-binding methyltransferase superfamily. TrmB family.

The enzyme catalyses guanosine(46) in tRNA + S-adenosyl-L-methionine = N(7)-methylguanosine(46) in tRNA + S-adenosyl-L-homocysteine. It functions in the pathway tRNA modification; N(7)-methylguanine-tRNA biosynthesis. Its function is as follows. Catalyzes the formation of N(7)-methylguanine at position 46 (m7G46) in tRNA. The chain is tRNA (guanine-N(7)-)-methyltransferase from Chlamydia pneumoniae (Chlamydophila pneumoniae).